Here is a 264-residue protein sequence, read N- to C-terminus: MDCVESYLSGDNSDESPVMHTWFSPSPSPSDSSSSPSSSASSSIGRNSDDGEKSSEDGGDDAGENEVESPYKGPLEMMESLEQVLPVRKGISKYYSGKSKSFTNLTAEAASALTSSSSMKDLAKPENPYSRRRRNLLCHQIWENNKTTPRGGISKKHVMSSSRSALTLAMAVAAGVMTGEGSSSGGDSSPGSSPTTSGSPPRQLHHHQHQMKKLPPLYPRSQGSFGNLTSSQSSLGFCAWRSFSVADFPRCFPATASGIGFNDS.

Disordered stretches follow at residues 1 to 76 (MDCV…GPLE) and 178 to 225 (TGEG…QGSF). Positions 29 to 43 (PSDSSSSPSSSASSS) are enriched in low complexity. Over residues 47 to 56 (NSDDGEKSSE) the composition is skewed to basic and acidic residues. The segment covering 57–67 (DGGDDAGENEV) has biased composition (acidic residues). Over residues 179 to 201 (GEGSSSGGDSSPGSSPTTSGSPP) the composition is skewed to low complexity. Over residues 203-212 (QLHHHQHQMK) the composition is skewed to basic residues.

The protein resides in the nucleus. Functionally, promotes slightly the tolerance to zinc (Zn) and to oxidizing chemicals (e.g. diamide). The polypeptide is Protein OXIDATIVE STRESS 3 LIKE 1 (Arabidopsis thaliana (Mouse-ear cress)).